The primary structure comprises 229 residues: MSSETGPVAVDPTLRRRIEPHEFEVFFDPRELRKETCLLYEINWGGRHSIWRHTSQNTNKHVEVNFIEKFTTERYFCPNTRCSITWFLSWSPCGECSRAITEFLSRYPHVTLFIYIARLYHHADPRNRQGLRDLISSGVTIQIMTEQESGYCWRNFVNYSPSNEAHWPRYPHLWVRLYVLELYCIILGLPPCLNILRRKQPQLTFFTIALQSCHYQRLPPHILWATGLK.

The CMP/dCMP-type deaminase domain maps to 10-134; sequence VDPTLRRRIE…PRNRQGLRDL (125 aa). His61 provides a ligand contact to Zn(2+). The active-site Proton donor is Glu63. Zn(2+) is bound by residues Cys93 and Cys96.

This sequence belongs to the cytidine and deoxycytidylate deaminase family. Homodimer. Interacts with A1CF; form an mRNA editing complex. Interacts with RBM47; form an mRNA editing complex. Found in a complex with CELF2/CUGBP2 and A1CF. Interacts with HNRPAB. Interacts with SYNCRIP. Zn(2+) is required as a cofactor. As to expression, expressed in the liver as well as small intestine.

Its subcellular location is the cytoplasm. The protein resides in the nucleus. It carries out the reaction a cytidine in mRNA + H2O + H(+) = a uridine in mRNA + NH4(+). The catalysed reaction is cytidine(6666) in apoB mRNA + H2O + H(+) = uridine(6666) in apoB mRNA + NH4(+). Functionally, cytidine deaminase catalyzing the cytidine to uridine postranscriptional editing of a variety of mRNAs. Form complexes with cofactors that confer differential editing activity and selectivity. Responsible for the postranscriptional editing of a CAA codon for Gln to a UAA codon for stop in the apolipoprotein B mRNA. Also involved in CGA (Arg) to UGA (Stop) editing in the NF1 mRNA. May also play a role in the epigenetic regulation of gene expression by participating in DNA demethylation. The protein is C-&gt;U-editing enzyme APOBEC-1 of Rattus norvegicus (Rat).